The chain runs to 185 residues: Ribosome-recycling factor (185 aa).

Belongs to the RRF family.

It is found in the cytoplasm. Functionally, responsible for the release of ribosomes from messenger RNA at the termination of protein biosynthesis. May increase the efficiency of translation by recycling ribosomes from one round of translation to another. This is Ribosome-recycling factor from Saccharophagus degradans (strain 2-40 / ATCC 43961 / DSM 17024).